Here is a 232-residue protein sequence, read N- to C-terminus: DASH complex subunit DUO1 (232 aa).

Disordered stretches follow at residues 1-44 (MADE…GGMR) and 133-232 (ERRR…RGAK). Positions 128–171 (ELEAEERRRQEEVERRAAEAERRREEARRKAEEEERRRAAAAAA) form a coiled coil. Over residues 133–165 (ERRRQEEVERRAAEAERRREEARRKAEEEERRR) the composition is skewed to basic and acidic residues. Low complexity-rich tracts occupy residues 167–183 (AAAA…VGRG) and 191–213 (GSGL…TTSG).

This sequence belongs to the DASH complex DUO1 family. In terms of assembly, component of the DASH complex consisting of ASK1, DAD1, DAD2, DAD3, DAD4, DAM1, DUO1, HSK3, SPC19 and SPC34, with a stoichiometry of one copy of each subunit per complex. Multiple DASH complexes oligomerize to form a ring that encircles spindle microtubules and organizes the rod-like NDC80 complexes of the outer kinetochore. DASH complex oligomerization strengthens microtubule attachments. On cytoplasmic microtubules, DASH complexes appear to form patches instead of rings.

The protein resides in the nucleus. The protein localises to the cytoplasm. It localises to the cytoskeleton. It is found in the spindle pole. Its subcellular location is the chromosome. The protein resides in the centromere. The protein localises to the kinetochore. Its function is as follows. Component of the DASH complex that connects microtubules with kinetochores and couples microtubule depolymerisation to chromosome movement; it is involved in retrieving kinetochores to the spindle poles before their re-orientation on the spindle in early mitosis and allows microtubule depolymerization to pull chromosomes apart and resist detachment during anaphase. Kinetochores, consisting of a centromere-associated inner segment and a microtubule-contacting outer segment, play a crucial role in chromosome segregation by mediating the physical connection between centromeric DNA and microtubules. Kinetochores also serve as an input point for the spindle assembly checkpoint, which delays anaphase until all chromosomes have bioriented on the mitotic spindle. This chain is DASH complex subunit DUO1, found in Chaetomium thermophilum (strain DSM 1495 / CBS 144.50 / IMI 039719) (Thermochaetoides thermophila).